The sequence spans 675 residues: G-protein-signaling modulator 1 (675 aa).

The interval 1-509 (MAGPAPPVAD…DLLTKFQSSR (509 aa)) is mediates association with membranes. TPR repeat units follow at residues 28–61 (CLEL…GTED), 66–99 (SAIY…ARTI), 106–139 (AKAS…AQEQ), 146–181 (ARAL…PPDV), 183–202 (ETLC…VKEL), 209–242 (GRAY…AKEF), 249–282 (RRAY…SRQL), 289–322 (AQAC…AQEL), and 329–362 (GRAC…SQEI). The tract at residues 364 to 487 (DRHGELTARM…VRVHVPRTSI (124 aa)) is interaction with STK11/LKB1. Residues 391-412 (SEKPDLAGYEAQGARPKRTQRL) are disordered. Ser-413 is modified (phosphoserine). Omega-N-methylarginine is present on Arg-421. A compositionally biased stretch (basic and acidic residues) spans 424 to 442 (LEREQNGDSHHSGDWRGPS). Positions 424 to 492 (LEREQNGDSH…PRTSIPRAPS (69 aa)) are disordered. Ser-445, Ser-469, Ser-471, Ser-492, and Ser-493 each carry phosphoserine. Positions 454-469 (KYQEGPDAERRPREGS) are enriched in basic and acidic residues. Residues 495–517 (EECFFDLLTKFQSSRMDDQRCPL) form the GoLoco 1 domain. Phosphoserine occurs at positions 545 and 569. GoLoco domains follow at residues 548-570 (TEEF…RASV), 596-618 (GDDF…RCPP), and 630-652 (DEDF…RVDL). 2 disordered regions span residues 610 to 630 (RIDD…TMPD) and 644 to 675 (RMDE…PGAS).

This sequence belongs to the GPSM family. As to quaternary structure, interacts with GNAI1, GNAI2 and GNAI3 preferentially in their GDP-bound state. May also interact with GNAO1. Interacts with STK11/LKB1 and MACF1. Interacts with INSC/inscuteable and FRMPD1. Post-translationally, phosphorylation regulates interaction with G(i/o) alpha. In terms of tissue distribution, expressed in intestinal cells.

Its subcellular location is the cytoplasm. It is found in the cytosol. It localises to the endoplasmic reticulum membrane. The protein resides in the golgi apparatus membrane. The protein localises to the cell membrane. Functionally, guanine nucleotide dissociation inhibitor (GDI) which functions as a receptor-independent activator of heterotrimeric G-protein signaling. Keeps G(i/o) alpha subunit in its GDP-bound form thus uncoupling heterotrimeric G-proteins signaling from G protein-coupled receptors. Controls spindle orientation and asymmetric cell fate of cerebral cortical progenitors. May also be involved in macroautophagy in intestinal cells. May play a role in drug addiction. In Homo sapiens (Human), this protein is G-protein-signaling modulator 1 (GPSM1).